A 459-amino-acid polypeptide reads, in one-letter code: UDP-N-acetylmuramate--L-alanine ligase (459 aa).

118 to 124 (GTHGKTT) lines the ATP pocket.

This sequence belongs to the MurCDEF family.

It localises to the cytoplasm. It carries out the reaction UDP-N-acetyl-alpha-D-muramate + L-alanine + ATP = UDP-N-acetyl-alpha-D-muramoyl-L-alanine + ADP + phosphate + H(+). It functions in the pathway cell wall biogenesis; peptidoglycan biosynthesis. Its function is as follows. Cell wall formation. The sequence is that of UDP-N-acetylmuramate--L-alanine ligase from Clostridium beijerinckii (strain ATCC 51743 / NCIMB 8052) (Clostridium acetobutylicum).